The primary structure comprises 562 residues: NAD-dependent malic enzyme (562 aa).

Y101 acts as the Proton donor in catalysis. R154 lines the NAD(+) pocket. K172 acts as the Proton acceptor in catalysis. 3 residues coordinate a divalent metal cation: E243, D244, and D267. Positions 267 and 415 each coordinate NAD(+).

The protein belongs to the malic enzymes family. In terms of assembly, homotetramer. The cofactor is Mg(2+). Mn(2+) is required as a cofactor.

It carries out the reaction (S)-malate + NAD(+) = pyruvate + CO2 + NADH. The enzyme catalyses oxaloacetate + H(+) = pyruvate + CO2. The chain is NAD-dependent malic enzyme from Vibrio parahaemolyticus serotype O3:K6 (strain RIMD 2210633).